Reading from the N-terminus, the 857-residue chain is Thiamine repressible genes regulatory protein thi5 (857 aa).

Residues 38–64 (CLSCRAKKIRCSGSEPCQACIATPSQC) constitute a DNA-binding region (zn(2)-C6 fungal-type). 2 disordered regions span residues 152–175 (AVKS…NFSS) and 797–819 (GHAL…HPSQ). Residues 159-175 (SFPSSSTPPSSDSNFSS) show a composition bias toward low complexity. Over residues 803–819 (PESNNSSNSFKPSHPSQ) the composition is skewed to polar residues.

The protein localises to the nucleus. Functionally, transcription factor that activates the nmt1 promoter. Regulation of thiamine repressible genes. Negatively regulates conjugation during meiosis, by inducing negative regulators which delay conjugation. Involved in thi1 regulation. This chain is Thiamine repressible genes regulatory protein thi5 (thi5), found in Schizosaccharomyces pombe (strain 972 / ATCC 24843) (Fission yeast).